A 513-amino-acid polypeptide reads, in one-letter code: Activin receptor type-2B (513 aa).

Residues 1–18 (MTAPWAALALLWGSLCAG) form the signal peptide. Residues 19–137 (SGRGEAETRE…PPPTAPTLLT (119 aa)) lie on the Extracellular side of the membrane. 5 disulfide bridges follow: C29/C59, C49/C77, C84/C103, C90/C102, and C104/C109. N42 and N65 each carry an N-linked (GlcNAc...) asparagine glycan. A helical transmembrane segment spans residues 138–158 (VLAYSLLPIGGLSLIVLLAFW). The Cytoplasmic segment spans residues 159–513 (MYRHRKPPYG…VDLLPKESSI (355 aa)). Residues 190–481 (LQLLEIKARG…AGCVEERVSL (292 aa)) form the Protein kinase domain. ATP contacts are provided by residues 196-204 (KARGRFGCV) and K217. D322 serves as the catalytic Proton acceptor. Positions 492-513 (DCLVSLVTSVTNVDLLPKESSI) are interaction with DYNLT1.

The protein belongs to the protein kinase superfamily. TKL Ser/Thr protein kinase family. TGFB receptor subfamily. In terms of assembly, forms an activin receptor complex with activin type II receptors such as ACVR1B. Interacts with VPS39. Interacts with DYNLT1. Interacts with BMP3. Interacts with BMP2. Mg(2+) serves as cofactor. Mn(2+) is required as a cofactor. Post-translationally, phosphorylated. Constitutive phosphorylation is in part catalyzed by its own kinase activity.

Its subcellular location is the cell membrane. It catalyses the reaction L-threonyl-[receptor-protein] + ATP = O-phospho-L-threonyl-[receptor-protein] + ADP + H(+). The enzyme catalyses L-seryl-[receptor-protein] + ATP = O-phospho-L-seryl-[receptor-protein] + ADP + H(+). Its function is as follows. Transmembrane serine/threonine kinase activin type-2 receptor forming an activin receptor complex with activin type-1 serine/threonine kinase receptors (ACVR1, ACVR1B or ACVR1c). Transduces the activin signal from the cell surface to the cytoplasm and is thus regulating many physiological and pathological processes including neuronal differentiation and neuronal survival, hair follicle development and cycling, FSH production by the pituitary gland, wound healing, extracellular matrix production, immunosuppression and carcinogenesis. Activin is also thought to have a paracrine or autocrine role in follicular development in the ovary. Within the receptor complex, the type-2 receptors act as a primary activin receptors (binds activin-A/INHBA, activin-B/INHBB as well as inhibin-A/INHA-INHBA). The type-1 receptors like ACVR1B act as downstream transducers of activin signals. Activin binds to type-2 receptor at the plasma membrane and activates its serine-threonine kinase. The activated receptor type-2 then phosphorylates and activates the type-1 receptor. Once activated, the type-1 receptor binds and phosphorylates the SMAD proteins SMAD2 and SMAD3, on serine residues of the C-terminal tail. Soon after their association with the activin receptor and subsequent phosphorylation, SMAD2 and SMAD3 are released into the cytoplasm where they interact with the common partner SMAD4. This SMAD complex translocates into the nucleus where it mediates activin-induced transcription. Inhibitory SMAD7, which is recruited to ACVR1B through FKBP1A, can prevent the association of SMAD2 and SMAD3 with the activin receptor complex, thereby blocking the activin signal. Activin signal transduction is also antagonized by the binding to the receptor of inhibin-B via the IGSF1 inhibin coreceptor. This Rattus norvegicus (Rat) protein is Activin receptor type-2B (Acvr2b).